Here is a 415-residue protein sequence, read N- to C-terminus: Gamma-glutamyl phosphate reductase (415 aa).

The protein belongs to the gamma-glutamyl phosphate reductase family.

It localises to the cytoplasm. It catalyses the reaction L-glutamate 5-semialdehyde + phosphate + NADP(+) = L-glutamyl 5-phosphate + NADPH + H(+). It participates in amino-acid biosynthesis; L-proline biosynthesis; L-glutamate 5-semialdehyde from L-glutamate: step 2/2. Its function is as follows. Catalyzes the NADPH-dependent reduction of L-glutamate 5-phosphate into L-glutamate 5-semialdehyde and phosphate. The product spontaneously undergoes cyclization to form 1-pyrroline-5-carboxylate. The chain is Gamma-glutamyl phosphate reductase from Thermotoga maritima (strain ATCC 43589 / DSM 3109 / JCM 10099 / NBRC 100826 / MSB8).